Reading from the N-terminus, the 54-residue chain is UPF0391 membrane protein R00741 (54 aa).

The next 2 helical transmembrane spans lie at 5–25 (ALVF…GIAG) and 30–50 (IAQV…VAGL).

This sequence belongs to the UPF0391 family.

It localises to the cell membrane. The protein is UPF0391 membrane protein R00741 of Rhizobium meliloti (strain 1021) (Ensifer meliloti).